The following is a 474-amino-acid chain: Alpha-galactosidase (474 aa).

An N-terminal signal peptide occupies residues 1-22; the sequence is MINFSLLTSIVLLASKVVGVSP. Disulfide bonds link C43-C75 and C122-C152. N44 carries N-linked (GlcNAc...) asparagine glycosylation. 3 residues coordinate substrate: D73, D74, and K148. D150 serves as the catalytic Nucleophile. N-linked (GlcNAc...) asparagine glycosylation occurs at N176. Substrate is bound at residue R206. D210 acts as the Proton donor in catalysis. 2 disulfides stabilise this stretch: C222–C238 and C224–C231. Q252 lines the substrate pocket. N-linked (GlcNAc...) asparagine glycans are attached at residues N271, N414, N423, N436, and N455.

This sequence belongs to the glycosyl hydrolase 27 family. As to quaternary structure, homotetramer.

The protein resides in the secreted. The enzyme catalyses Hydrolysis of terminal, non-reducing alpha-D-galactose residues in alpha-D-galactosides, including galactose oligosaccharides, galactomannans and galactolipids.. This is Alpha-galactosidase (MEL) from Torulaspora delbrueckii (Yeast).